The primary structure comprises 230 residues: Putative N-acetylmannosamine-6-phosphate 2-epimerase (230 aa).

The protein belongs to the NanE family.

The catalysed reaction is an N-acyl-D-glucosamine 6-phosphate = an N-acyl-D-mannosamine 6-phosphate. It participates in amino-sugar metabolism; N-acetylneuraminate degradation; D-fructose 6-phosphate from N-acetylneuraminate: step 3/5. In terms of biological role, converts N-acetylmannosamine-6-phosphate (ManNAc-6-P) to N-acetylglucosamine-6-phosphate (GlcNAc-6-P). The sequence is that of Putative N-acetylmannosamine-6-phosphate 2-epimerase from Malacoplasma penetrans (strain HF-2) (Mycoplasma penetrans).